The following is a 207-amino-acid chain: Ribosomal RNA small subunit methyltransferase G (207 aa).

S-adenosyl-L-methionine-binding positions include Gly-73, Leu-78, Val-124–Glu-125, and Arg-139.

This sequence belongs to the methyltransferase superfamily. RNA methyltransferase RsmG family.

It localises to the cytoplasm. It catalyses the reaction guanosine(527) in 16S rRNA + S-adenosyl-L-methionine = N(7)-methylguanosine(527) in 16S rRNA + S-adenosyl-L-homocysteine. In terms of biological role, specifically methylates the N7 position of guanine in position 527 of 16S rRNA. The chain is Ribosomal RNA small subunit methyltransferase G from Escherichia coli O17:K52:H18 (strain UMN026 / ExPEC).